Here is a 960-residue protein sequence, read N- to C-terminus: Isoleucine--tRNA ligase (960 aa).

Residues 60–70 (PYANGSLHIGH) carry the 'HIGH' region motif. Glu573 is an L-isoleucyl-5'-AMP binding site. The 'KMSKS' region signature appears at 614 to 618 (KMSKS). Lys617 serves as a coordination point for ATP. Residues Cys929, Cys932, Cys949, and Cys952 each contribute to the Zn(2+) site.

It belongs to the class-I aminoacyl-tRNA synthetase family. IleS type 1 subfamily. Monomer. It depends on Zn(2+) as a cofactor.

The protein resides in the cytoplasm. The catalysed reaction is tRNA(Ile) + L-isoleucine + ATP = L-isoleucyl-tRNA(Ile) + AMP + diphosphate. Its function is as follows. Catalyzes the attachment of isoleucine to tRNA(Ile). As IleRS can inadvertently accommodate and process structurally similar amino acids such as valine, to avoid such errors it has two additional distinct tRNA(Ile)-dependent editing activities. One activity is designated as 'pretransfer' editing and involves the hydrolysis of activated Val-AMP. The other activity is designated 'posttransfer' editing and involves deacylation of mischarged Val-tRNA(Ile). The polypeptide is Isoleucine--tRNA ligase (Nostoc sp. (strain PCC 7120 / SAG 25.82 / UTEX 2576)).